The chain runs to 1394 residues: MEEIPIKVAVRIRPLLCKEVLHNHQVCVRDIPNTQQIIIGRDRVFTFDFVFGKNSTQDEVYNTCIKPLVLSLIEGYNATVFAYGQTGSGKTYTIGGGHVASVVEGQKGIIPRAIQEIFQSISENPSIDFKIKVSYIEVYKEDLRDLLELETSMKDLHIREDEKGNTVIVGAKECQVESVEDVMSLLQVGNAARHTGTTQMNEHSSRSHAIFTISVCQVEKNAEAAENGEWYSHRHIVSKFHFVDLAGSERVTKTGNTGERFKESIQINSGLLALGNVISALGDPRRKSSHIPYRDAKITRLLKDSLGGSAKTVMITCVSPSSSDFDESLNSLKYANRARNIRNKPALNISPQADRMDEMEFEIKLLREALQSHQASISQASQASSENVPDQNRIHSLEEQVAQLQEECLGYQDCIEQAFAFLVDLKDAVKLNQKQQHKLQEWFSRTQEVRKAVLTPLPGNQGIGNLEEGPQHLTVLQLKRELKKYQCALAADQVVFTQKDLELEELRTQVQLMMQESKGHAVSLKEAQKVNRLQNEKIIEQQLLVDQLSAELAKRSLSVPTSAKESCGDGPDARASEKRPHTAPFESHWGHYVYIPSRQDFKKVCSSTPVYSLDQVFAGFRTRSQMLMGHLEDQDEVLHCQFSDNSDDEDSEGQEKPRVRSRSHSWAKKPGSVCSLVELSDTQAESQRSYLGNGDLKMESLQESQEINLQKLRTSELILNKAKQKMRELTINIRMKEDLIKELIKTGNNAKSVSRQYSLKVTKLEHEAEQAKVELTETRKQLQELESKDLSDVALKVKLQKEFRKKMDAAKMRVQVLQKKQQDSKKLASLSIQNEKRASELEHNVDHLKYQKVQLQRRLREEGEKKKQLDAEIKRDQQKIKELQLKAGQGEGLNPKAEDQDGFNLNRRKSPFRSGDQFQKLDEQRKWLDEEVEKVLSQRQELEMLEEDLKKREAIVSKKEALLQEKSLLENKKLRSSQALSTDGLKISARLNLLDQELSEKSLQLESSPTEEKMKISEQVQALQRERDQLQRQRNSVDERLKHGRVLSPKEEHLLFQLEEGIEALEAAIEFKNESIQSRQNSLKASFQNLSQSEANVLEKLVCLNITEIRAILFKYFNKVINLRETERKQQLQNKEMKMKVLERDNVVHELESALEHLRLQCDRRLTLQQKEHEQKMQLLLQHFKDQDGDSIIETLKNYEDKIQQLEKDLYFYKKTSRDLKKRLKDPAQGAAQWQRTLTEHHDAGDGVLNPEETTVLSEELKWASRTENTKLNGSEREVDNSSSSLKTQPLTQQIPEDGPDSLPARSSIAPSSGQLQSIADKTEARPFTHSQSPVPHQFQPVRSIGPLQGVKPVKLCRRELRQISAMELSLRRCSLGAGGRSMTADSLEDPEEN.

The Kinesin motor domain occupies 5–341 (PIKVAVRIRP…LKYANRARNI (337 aa)). Residue 84–91 (GQTGSGKT) coordinates ATP. Coiled-coil stretches lie at residues 352-418 (QADR…IEQA) and 498-554 (QKDL…ELAK). 2 disordered regions span residues 559-582 (VPTS…RPHT) and 642-665 (FSDN…RSHS). Positions 571–580 (PDARASEKRP) are enriched in basic and acidic residues. A phosphoserine mark is found at S643, S646, S672, S675, and S704. Coiled-coil stretches lie at residues 709–891 (LQKL…GQGE), 921–1078 (LDEQ…SIQS), 1118–1152 (NKVI…HELE), and 1186–1226 (DQDG…RLKD). The disordered stretch occupies residues 886–916 (KAGQGEGLNPKAEDQDGFNLNRRKSPFRSGD). Residue S999 is modified to Phosphoserine. Residues 1267–1280 (TENTKLNGSEREVD) show a composition bias toward basic and acidic residues. Disordered stretches follow at residues 1267–1319 (TENT…LQSI) and 1325–1344 (ARPF…PVRS). Composition is skewed to polar residues over residues 1281–1295 (NSSS…TQQI) and 1309–1319 (IAPSSGQLQSI). A phosphoserine mark is found at S1365 and S1387.

Belongs to the TRAFAC class myosin-kinesin ATPase superfamily. Kinesin family. KIF27 subfamily. Interacts with STK36.

The protein localises to the cytoplasm. Its subcellular location is the cytoskeleton. The protein resides in the cell projection. It localises to the cilium. Its function is as follows. Plays an essential role in motile ciliogenesis. The polypeptide is Kinesin-like protein KIF27 (Kif27) (Mus musculus (Mouse)).